We begin with the raw amino-acid sequence, 392 residues long: GTPase Obg (392 aa).

Positions 1-159 (MKFIDEALIR…RDLQLELMLL (159 aa)) constitute an Obg domain. Residues 160 to 333 (ADVGMLGLPN…LCRDIMDFIE (174 aa)) enclose the OBG-type G domain. GTP-binding positions include 166–173 (GLPNAGKS), 191–195 (FTTLV), 213–216 (DIPG), 283–286 (NKID), and 314–316 (SAA). Mg(2+) is bound by residues Ser-173 and Thr-193. Residues 362–392 (EQVFTEDDQEGDDWDDWSEDDEEGVEIIYKP) form a disordered region. A compositionally biased stretch (acidic residues) spans 365–386 (FTEDDQEGDDWDDWSEDDEEGV).

This sequence belongs to the TRAFAC class OBG-HflX-like GTPase superfamily. OBG GTPase family. Monomer. Mg(2+) is required as a cofactor.

It localises to the cytoplasm. An essential GTPase which binds GTP, GDP and possibly (p)ppGpp with moderate affinity, with high nucleotide exchange rates and a fairly low GTP hydrolysis rate. Plays a role in control of the cell cycle, stress response, ribosome biogenesis and in those bacteria that undergo differentiation, in morphogenesis control. This is GTPase Obg from Histophilus somni (strain 129Pt) (Haemophilus somnus).